The chain runs to 241 residues: Chloride intracellular channel protein 1 (241 aa).

Position 2 is an N-acetylalanine (Ala2). The segment at 2–90 (AEEQPQVELF…EEFLEAVLCP (89 aa)) is required for insertion into the membrane. Lys13 is subject to N6-acetyllysine. Positions 24–27 (CPFS) match the G-site motif. Residues Cys24 and Cys59 are joined by a disulfide bond. Residues 26-46 (FSQRLFMVLWLKGVTFNVTTV) traverse the membrane as a helical segment. Residues 93 to 233 (YPKLAALNPE…PDDEEIELAY (141 aa)) form the GST C-terminal domain. Position 119 is an N6-acetyllysine (Lys119). Residue Ser121 is modified to Phosphoserine. Lys131 carries the N6-acetyllysine modification. Phosphoserine occurs at positions 156 and 211. Position 233 is a phosphotyrosine (Tyr233).

The protein belongs to the chloride channel CLIC family. Monomer. Homodimer (in vitro). Interacts with TRAPPC2. Dimerization requires a conformation change that leads to the exposure of a large hydrophobic surface. In vivo, this may lead to membrane insertion. Expressed in neonatal and adult cardiomyocytes (at protein level).

The protein localises to the nucleus. It is found in the nucleus membrane. It localises to the cytoplasm. The protein resides in the cell membrane. Its subcellular location is the endoplasmic reticulum. It carries out the reaction L-dehydroascorbate + 2 glutathione = glutathione disulfide + L-ascorbate. It catalyses the reaction chloride(in) = chloride(out). The catalysed reaction is iodide(out) = iodide(in). The enzyme catalyses thiocyanate(in) = thiocyanate(out). It carries out the reaction nitrate(in) = nitrate(out). It catalyses the reaction bromide(in) = bromide(out). The catalysed reaction is fluoride(in) = fluoride(out). Functionally, in the soluble state, catalyzes glutaredoxin-like thiol disulfide exchange reactions with reduced glutathione as electron donor. Reduces selenite and dehydroascorbate and may act as an antioxidant during oxidative stress response. Can insert into membranes and form voltage-dependent multi-ion conductive channels. Membrane insertion seems to be redox-regulated and may occur only under oxidizing conditions. Involved in regulation of the cell cycle. In Rattus norvegicus (Rat), this protein is Chloride intracellular channel protein 1.